Reading from the N-terminus, the 363-residue chain is Sulfate/thiosulfate import ATP-binding protein CysA (363 aa).

Residues 3 to 237 (IEINNISKYF…PATRFVLEFL (235 aa)) form the ABC transporter domain. 35 to 42 (GPSGSGKT) lines the ATP pocket.

Belongs to the ABC transporter superfamily. Sulfate/tungstate importer (TC 3.A.1.6) family. In terms of assembly, the complex is composed of two ATP-binding proteins (CysA), two transmembrane proteins (CysT and CysW) and a solute-binding protein (CysP).

Its subcellular location is the cell inner membrane. It carries out the reaction sulfate(out) + ATP + H2O = sulfate(in) + ADP + phosphate + H(+). It catalyses the reaction thiosulfate(out) + ATP + H2O = thiosulfate(in) + ADP + phosphate + H(+). Part of the ABC transporter complex CysAWTP involved in sulfate/thiosulfate import. Responsible for energy coupling to the transport system. In Yersinia pseudotuberculosis serotype I (strain IP32953), this protein is Sulfate/thiosulfate import ATP-binding protein CysA.